The sequence spans 202 residues: ATP-dependent Clp protease proteolytic subunit (202 aa).

The Nucleophile role is filled by S101. H126 is a catalytic residue.

The protein belongs to the peptidase S14 family. As to quaternary structure, component of the chloroplastic Clp protease core complex.

Its subcellular location is the plastid. The protein localises to the chloroplast stroma. It catalyses the reaction Hydrolysis of proteins to small peptides in the presence of ATP and magnesium. alpha-casein is the usual test substrate. In the absence of ATP, only oligopeptides shorter than five residues are hydrolyzed (such as succinyl-Leu-Tyr-|-NHMec, and Leu-Tyr-Leu-|-Tyr-Trp, in which cleavage of the -Tyr-|-Leu- and -Tyr-|-Trp bonds also occurs).. Its function is as follows. Cleaves peptides in various proteins in a process that requires ATP hydrolysis. Has a chymotrypsin-like activity. Plays a major role in the degradation of misfolded proteins. The polypeptide is ATP-dependent Clp protease proteolytic subunit (Buxus microphylla (Littleleaf boxwood)).